The following is a 108-amino-acid chain: MFKFVIYLFTFIAFANANYTTWSLVTDYTTYCPQSTEITVNNSIITITGPTTLTITGECTLDYVATVEAAPSSIPSNVTVIESNGASKLNLRSLAGAGLVAAIFIAFI.

Residues 1–17 form the signal peptide; that stretch reads MFKFVIYLFTFIAFANA. N18, N41, and N77 each carry an N-linked (GlcNAc...) asparagine glycan. N84 carries GPI-anchor amidated asparagine lipidation. Positions 85 to 108 are cleaved as a propeptide — removed in mature form; it reads GASKLNLRSLAGAGLVAAIFIAFI.

This sequence belongs to the SED1 family. In terms of processing, the GPI-anchor is attached to the protein in the endoplasmic reticulum and serves to target the protein to the cell surface. There, the glucosamine-inositol phospholipid moiety is cleaved off and the GPI-modified mannoprotein is covalently attached via its lipidless GPI glycan remnant to the 1,6-beta-glucan of the outer cell wall layer.

It localises to the secreted. The protein localises to the cell wall. It is found in the membrane. Functionally, cell wall protein that plays a role in adaptation and resistance to cell wall stress. The polypeptide is Cell wall protein PGA48 (PGA48) (Candida albicans (strain SC5314 / ATCC MYA-2876) (Yeast)).